Reading from the N-terminus, the 142-residue chain is Putative pre-16S rRNA nuclease (142 aa).

It belongs to the YqgF nuclease family.

The protein localises to the cytoplasm. In terms of biological role, could be a nuclease involved in processing of the 5'-end of pre-16S rRNA. The sequence is that of Putative pre-16S rRNA nuclease from Chlorobaculum tepidum (strain ATCC 49652 / DSM 12025 / NBRC 103806 / TLS) (Chlorobium tepidum).